A 228-amino-acid chain; its full sequence is 2,3-bisphosphoglycerate-dependent phosphoglycerate mutase (228 aa).

Residues 8-15 (RHGQSQWN), 21-22 (TG), R60, 87-90 (ERHY), K98, 114-115 (RR), and 180-181 (GN) contribute to the substrate site. The active-site Tele-phosphohistidine intermediate is H9. E87 acts as the Proton donor/acceptor in catalysis.

Belongs to the phosphoglycerate mutase family. BPG-dependent PGAM subfamily. As to quaternary structure, homodimer.

It catalyses the reaction (2R)-2-phosphoglycerate = (2R)-3-phosphoglycerate. Its pathway is carbohydrate degradation; glycolysis; pyruvate from D-glyceraldehyde 3-phosphate: step 3/5. Its function is as follows. Catalyzes the interconversion of 2-phosphoglycerate and 3-phosphoglycerate. The sequence is that of 2,3-bisphosphoglycerate-dependent phosphoglycerate mutase from Novosphingobium aromaticivorans (strain ATCC 700278 / DSM 12444 / CCUG 56034 / CIP 105152 / NBRC 16084 / F199).